A 66-amino-acid polypeptide reads, in one-letter code: Surface composition regulator (66 aa).

The protein belongs to the GlgS family.

Its function is as follows. Major determinant of cell surface composition. Negatively regulates motility, adhesion and synthesis of biofilm exopolysaccharides. The protein is Surface composition regulator of Shigella flexneri.